Reading from the N-terminus, the 64-residue chain is Disintegrin lebein-1-beta (64 aa).

The region spanning N1–D64 is the Disintegrin domain. Intrachain disulfides connect C6-C29, C20-C26, C25-C50, and C38-C57. Residues R42–D44 carry the Cell attachment site motif.

Belongs to the disintegrin family. Dimeric disintegrin subfamily. Heterodimer with subunit alpha; disulfide-linked. Expressed by the venom gland.

Its subcellular location is the secreted. Strongly inhibits ADP-induced platelet aggregation on human platelet-rich plasma. Also avidly binds to the laminin-binding beta-1 integrins (alpha-3/beta-1, alpha-6/beta-1, and alpha-7/beta-1) in an RGD-independent manner. The protein is Disintegrin lebein-1-beta of Macrovipera lebetinus (Levantine viper).